Consider the following 555-residue polypeptide: TBCC domain-containing protein 1 (555 aa).

Positions 302 to 433 (PEVSPMVIMS…LEDHMAQVGL (132 aa)) constitute a C-CAP/cofactor C-like domain.

This sequence belongs to the TBCC family.

It localises to the cytoplasm. The protein resides in the cytoskeleton. Its subcellular location is the microtubule organizing center. The protein localises to the centrosome. It is found in the spindle pole. Its function is as follows. May play a role in the regulation of centrosome and Golgi apparatus positioning. The chain is TBCC domain-containing protein 1 (TBCCD1) from Gallus gallus (Chicken).